A 773-amino-acid polypeptide reads, in one-letter code: Leucine-rich repeat-containing protein let-4 (773 aa).

An N-terminal signal peptide occupies residues 1–20 (MRLLLCLLLFSTLLINSTNA). Residues 21 to 689 (CPGVITQACF…RLEKSFFTTT (669 aa)) lie on the Extracellular side of the membrane. LRR repeat units follow at residues 61–84 (VGLI…FFSG), 85–107 (LFIR…AFAG), 109–132 (NPVL…ALAG), 133–157 (LPNL…IFPN), 159–181 (NKLY…TFQN), 183–206 (KNSI…AIRG), 207–230 (LKQL…NFLN), 231–254 (LPVL…AFLN), 256–278 (PSLR…QFQT), 279–302 (FEQL…SLSG), 303–326 (LKQL…AFTN), 328–349 (SIVV…IISG), 350–373 (LPNL…AFYD), 375–397 (ASLV…TFLA), 399–421 (LNLL…AFNS), and 486–516 (LVQI…AFQQ). A helical membrane pass occupies residues 690–710 (IIFICVGTAVIVLVVVIAGLC). Over 711-773 (ISKHRQLQFE…PGSSYCNYYK (63 aa)) the chain is Cytoplasmic.

In L1 larvae, expressed in a subset of epithelial cells including epidermal, vulval and rectal cells and the excretory duct and pore. Absent from internal epithelia such as the gut and pharyngeal tubes. Transiently expressed in the excretory canal cell at the 1.5-fold embryonic stage but no longer visible in this cell at hatching.

The protein resides in the apical cell membrane. Required for apical extracellular matrix organization and epithelial junction maintenance. In Caenorhabditis elegans, this protein is Leucine-rich repeat-containing protein let-4 (let-4).